A 220-amino-acid chain; its full sequence is Orotate phosphoribosyltransferase (220 aa).

5-phospho-alpha-D-ribose 1-diphosphate is bound at residue Lys-26. An orotate-binding site is contributed by 34-35 (FF). Residues 72 to 73 (YK), Arg-99, Lys-100, Lys-103, His-105, and 125 to 133 (DDVISAGTS) each bind 5-phospho-alpha-D-ribose 1-diphosphate. Orotate is bound by residues Ser-129 and Arg-157.

This sequence belongs to the purine/pyrimidine phosphoribosyltransferase family. PyrE subfamily. In terms of assembly, homodimer. Requires Mg(2+) as cofactor.

It catalyses the reaction orotidine 5'-phosphate + diphosphate = orotate + 5-phospho-alpha-D-ribose 1-diphosphate. It functions in the pathway pyrimidine metabolism; UMP biosynthesis via de novo pathway; UMP from orotate: step 1/2. In terms of biological role, catalyzes the transfer of a ribosyl phosphate group from 5-phosphoribose 1-diphosphate to orotate, leading to the formation of orotidine monophosphate (OMP). In Nitrosococcus oceani (strain ATCC 19707 / BCRC 17464 / JCM 30415 / NCIMB 11848 / C-107), this protein is Orotate phosphoribosyltransferase.